Here is a 668-residue protein sequence, read N- to C-terminus: COBRA-like protein 11 (668 aa).

The N-terminal stretch at 1–29 (MKKLRYVHLNLLLLLLPLINLQFPTLSLA) is a signal peptide. Asn69, Asn125, Asn254, Asn318, Asn329, Asn358, Asn412, Asn432, Asn473, Asn552, Asn560, and Asn579 each carry an N-linked (GlcNAc...) asparagine glycan. Ser636 carries the GPI-anchor amidated serine lipid modification. The propeptide at 637 to 668 (SGMRLSGIRFLPSILLAITTFHAITDRLLTGV) is removed in mature form.

The protein belongs to the COBRA family. In terms of tissue distribution, mostly expressed in flowers, stamen, anthers and pollen, and, to a lower extent, possibly in roots, stems, leaves and siliques.

It localises to the cell membrane. Functionally, involved in the deposition of apical pectin cap and cellulose microfibrils in pollen tubes. Implicated in pollen tubes growth in the female transmitting tract of pistil and toward micropyles, via the perception of ovule guidance cues. In Arabidopsis thaliana (Mouse-ear cress), this protein is COBRA-like protein 11.